The following is a 240-amino-acid chain: Endonuclease V (240 aa).

The Mg(2+) site is built by aspartate 46 and aspartate 116.

This sequence belongs to the endonuclease V family. The cofactor is Mg(2+).

Its subcellular location is the cytoplasm. The enzyme catalyses Endonucleolytic cleavage at apurinic or apyrimidinic sites to products with a 5'-phosphate.. Its function is as follows. DNA repair enzyme involved in the repair of deaminated bases. Selectively cleaves double-stranded DNA at the second phosphodiester bond 3' to a deoxyinosine leaving behind the intact lesion on the nicked DNA. This is Endonuclease V from Rhodospirillum centenum (strain ATCC 51521 / SW).